The following is a 77-amino-acid chain: ATP synthase subunit 9, mitochondrial (77 aa).

2 helical membrane-spanning segments follow: residues 8-28 (MGAG…GNVL) and 45-72 (LFGY…LISF).

Belongs to the ATPase C chain family. In terms of assembly, F-type ATPases have 2 components, CF(1) - the catalytic core - and CF(0) - the membrane proton channel. CF(1) has five subunits: alpha(3), beta(3), gamma(1), delta(1), epsilon(1). CF(0) has three main subunits: a, b and c.

It is found in the mitochondrion membrane. Functionally, this protein is one of the chains of the nonenzymatic membrane component (F0) of mitochondrial ATPase. This Petunia sp. (Petunia) protein is ATP synthase subunit 9, mitochondrial (ATP9).